A 103-amino-acid chain; its full sequence is Histone H4 (103 aa).

Positions 1–14 are enriched in gly residues; sequence MSGRGKGGKGLGKG. The interval 1–20 is disordered; sequence MSGRGKGGKGLGKGGAKRHR. Ser-2 is subject to N-acetylserine. 2 positions are modified to N6-acetyl-N6-methyllysine; alternate: Lys-6 and Lys-13. Lys-17 is modified (N6-acetyllysine). A DNA-binding region spans residues 17-21; it reads KRHRK. At Lys-21 the chain carries N6-methyllysine.

It belongs to the histone H4 family. As to quaternary structure, the nucleosome is a histone octamer containing two molecules each of H2A, H2B, H3 and H4 assembled in one H3-H4 heterotetramer and two H2A-H2B heterodimers. The octamer wraps approximately 147 bp of DNA.

The protein localises to the nucleus. It is found in the chromosome. In terms of biological role, core component of nucleosome. Nucleosomes wrap and compact DNA into chromatin, limiting DNA accessibility to the cellular machineries which require DNA as a template. Histones thereby play a central role in transcription regulation, DNA repair, DNA replication and chromosomal stability. DNA accessibility is regulated via a complex set of post-translational modifications of histones, also called histone code, and nucleosome remodeling. The polypeptide is Histone H4 (H4DEKL) (Dendronephthya klunzingeri (Klunzinger's soft coral)).